The chain runs to 623 residues: DELLA protein RHT-1 (623 aa).

Positions 1–27 (MKREYQDAGGSGGGGGGMGSSEDKMMV) are disordered. A compositionally biased stretch (gly residues) spans 9-19 (GGSGGGGGGMG). A DELLA motif motif is present at residues 38–42 (DELLA). 2 disordered regions span residues 109–138 (LNAP…GYFD) and 159–201 (AGAT…GARS). The span at 111–120 (APPPPLPPAP) shows a compositional bias: pro residues. Composition is skewed to low complexity over residues 121 to 131 (QLNASTSSTVT) and 181 to 201 (GGSS…GARS). The GRAS domain occupies 225 to 619 (VDTQEAGIRL…RPLIATSAWR (395 aa)). Residues 232–288 (IRLVHALLACAEAVQQENLSAAEALVKQIPLLAASQGGAMRKVAAYFGEALARRVFR) are leucine repeat I (LRI). The LxCxE motif signature appears at 239-243 (LACAE). The segment at 307–372 (HAHFYESCPY…GGPPSFRLTG (66 aa)) is VHIID. The VHIID motif lies at 338 to 342 (VHVVD). The segment at 386-425 (QVGWKLAQFAHTIRVDFQYRGLVAATLADLEPFMLQPEGE) is leucine repeat II (LRII). The tract at residues 435-540 (IAVNSVFEMH…EVYLGRQICN (106 aa)) is PFYRE. The SAW stretch occupies residues 543-619 (ACEGAERTER…RPLIATSAWR (77 aa)).

Belongs to the GRAS family. DELLA subfamily. Post-translationally, phosphorylated. Ubiquitinated. Upon GA application it is ubiquitinated, leading to its subsequent degradation.

It localises to the nucleus. Functionally, probable transcriptional regulator that acts as a repressor of the gibberellin (GA) signaling pathway. Probably acts by participating in large multiprotein complexes that repress transcription of GA-inducible genes. Upon GA application, it is degraded by the proteasome, allowing the GA signaling pathway. The protein is DELLA protein RHT-1 (RHT1) of Triticum aestivum (Wheat).